The primary structure comprises 295 residues: Glutamyl-Q tRNA(Asp) synthetase (295 aa).

L-glutamate-binding positions include 9 to 13 (RFAPT) and Glu45. The 'HIGH' region signature appears at 12–22 (PTPSGYLHFGS). The Zn(2+) site is built by Cys101, Cys103, Tyr115, and Cys119. L-glutamate contacts are provided by Tyr172 and Arg190. The short motif at 228–232 (KLGKS) is the 'KMSKS' region element. Lys231 serves as a coordination point for ATP.

The protein belongs to the class-I aminoacyl-tRNA synthetase family. GluQ subfamily. It depends on Zn(2+) as a cofactor.

Functionally, catalyzes the tRNA-independent activation of glutamate in presence of ATP and the subsequent transfer of glutamate onto a tRNA(Asp). Glutamate is transferred on the 2-amino-5-(4,5-dihydroxy-2-cyclopenten-1-yl) moiety of the queuosine in the wobble position of the QUC anticodon. The polypeptide is Glutamyl-Q tRNA(Asp) synthetase (Pseudomonas syringae pv. tomato (strain ATCC BAA-871 / DC3000)).